The chain runs to 89 residues: MYSLEISLRYSPFPLSIQKKDYEDVKRIYDEIKDFMQGKNTNSDLIEISCEKVQDKLITVLAKEVISVQIYEKSSVAGGSKRPGFSLDI.

Belongs to the UPF0367 family.

This is UPF0367 protein P9515_01381 from Prochlorococcus marinus (strain MIT 9515).